Here is a 360-residue protein sequence, read N- to C-terminus: Phospho-N-acetylmuramoyl-pentapeptide-transferase (360 aa).

10 consecutive transmembrane segments (helical) span residues 26–46 (AILS…IMIK), 70–90 (GTPT…ILLW), 94–114 (SNPY…VGFV), 132–152 (WKYF…YAYG), 168–188 (VMPQ…VGTS), 199–219 (GLAI…AWAT), 236–256 (ASEL…FLWF), 263–283 (VFMG…IAVL), 288–308 (LVLV…ILQV), and 338–358 (VIVR…ATLK).

The protein belongs to the glycosyltransferase 4 family. MraY subfamily. Requires Mg(2+) as cofactor.

The protein localises to the cell inner membrane. It carries out the reaction UDP-N-acetyl-alpha-D-muramoyl-L-alanyl-gamma-D-glutamyl-meso-2,6-diaminopimeloyl-D-alanyl-D-alanine + di-trans,octa-cis-undecaprenyl phosphate = di-trans,octa-cis-undecaprenyl diphospho-N-acetyl-alpha-D-muramoyl-L-alanyl-D-glutamyl-meso-2,6-diaminopimeloyl-D-alanyl-D-alanine + UMP. It functions in the pathway cell wall biogenesis; peptidoglycan biosynthesis. Its function is as follows. Catalyzes the initial step of the lipid cycle reactions in the biosynthesis of the cell wall peptidoglycan: transfers peptidoglycan precursor phospho-MurNAc-pentapeptide from UDP-MurNAc-pentapeptide onto the lipid carrier undecaprenyl phosphate, yielding undecaprenyl-pyrophosphoryl-MurNAc-pentapeptide, known as lipid I. This chain is Phospho-N-acetylmuramoyl-pentapeptide-transferase, found in Vibrio parahaemolyticus serotype O3:K6 (strain RIMD 2210633).